The chain runs to 724 residues: Methionine--tRNA ligase (724 aa).

The 'HIGH' region signature appears at Pro12 to Asn22. Zn(2+) contacts are provided by Cys143, Cys146, Cys155, and Cys158. The 'KMSKS' region signature appears at Lys330–Ser334. Residue Lys333 coordinates ATP. One can recognise a tRNA-binding domain in the interval Phe560–Ile665.

Belongs to the class-I aminoacyl-tRNA synthetase family. MetG type 1 subfamily. In terms of assembly, homodimer. It depends on Zn(2+) as a cofactor.

It localises to the cytoplasm. The enzyme catalyses tRNA(Met) + L-methionine + ATP = L-methionyl-tRNA(Met) + AMP + diphosphate. Is required not only for elongation of protein synthesis but also for the initiation of all mRNA translation through initiator tRNA(fMet) aminoacylation. The chain is Methionine--tRNA ligase from Borreliella afzelii (strain PKo) (Borrelia afzelii).